Reading from the N-terminus, the 486-residue chain is Methionine aminopeptidase 2-2 (486 aa).

Positions M1–R10 are enriched in basic and acidic residues. Residues M1–T120 form a disordered region. A compositionally biased stretch (acidic residues) spans G46–E56. Residues K93–K108 are compositionally biased toward basic residues. Residue H238 participates in substrate binding. Positions 259, 270, and 339 each coordinate a divalent metal cation. H347 contacts substrate. A divalent metal cation contacts are provided by E372 and E467.

Belongs to the peptidase M24A family. Methionine aminopeptidase eukaryotic type 2 subfamily. The cofactor is Co(2+). Requires Zn(2+) as cofactor. It depends on Mn(2+) as a cofactor. Fe(2+) is required as a cofactor.

It is found in the cytoplasm. The enzyme catalyses Release of N-terminal amino acids, preferentially methionine, from peptides and arylamides.. Functionally, cotranslationally removes the N-terminal methionine from nascent proteins. The N-terminal methionine is often cleaved when the second residue in the primary sequence is small and uncharged (Met-Ala-, Cys, Gly, Pro, Ser, Thr, or Val). This is Methionine aminopeptidase 2-2 from Aspergillus fumigatus (strain ATCC MYA-4609 / CBS 101355 / FGSC A1100 / Af293) (Neosartorya fumigata).